A 106-amino-acid polypeptide reads, in one-letter code: UPF0145 protein BF0270 (106 aa).

This sequence belongs to the UPF0145 family.

This Bacteroides fragilis (strain YCH46) protein is UPF0145 protein BF0270.